Here is a 200-residue protein sequence, read N- to C-terminus: Eukaryotic translation initiation factor isoform 4E (200 aa).

A disordered region spans residues 1–22 (MATEAPIEATEVPPASATETVA). MRNA contacts are provided by residues 44–49 (QGAAWG), K76, and 94–95 (WE). An intrachain disulfide couples C99 to C138. Residues 145 to 150 (RRSQDK) and 189 to 192 (KRER) each bind mRNA.

The protein belongs to the eukaryotic initiation factor 4E family. EIF4F is a multi-subunit complex, the composition of which varies with external and internal environmental conditions. It is composed of at least EIF4A, EIF4E and EIF4G. EIF4E is also known to interact with other partners. In higher plants two isoforms of EIF4F have been identified, named isoform EIF4F and isoform EIF(iso)4F. Isoform EIF4F has subunits p220 and p26, whereas isoform EIF(iso)4F has subunits p82 and p28. In terms of assembly, (Microbial infection) Interacts with viral genome-linked protein (VPg); this interaction is possible in susceptible hosts but impaired in resistant plants. According to the redox status, the Cys-99-Cys-138 disulfide bridge may have a role in regulating protein function by affecting its ability to bind capped mRNA. In terms of tissue distribution, expressed ubiquitously in seedlings, roots, leaves, sepals, petals, anthers and dehisced pollen, with highest levels in pollen, maturing anthers and roots. Strongly expressed in susceptible plants but not in resistant ones.

It localises to the cytoplasm. The protein localises to the nucleus. Component of the protein complex eIF4F, which is involved in the recognition of the mRNA cap, ATP-dependent unwinding of 5'-terminal secondary structure and recruitment of mRNA to the ribosome. Recognizes and binds the 7-methylguanosine-containing mRNA cap during an early step in the initiation of protein synthesis and facilitates ribosome binding by inducing the unwinding of the mRNAs secondary structures. Key component of recessive resistance to potyviruses. Its function is as follows. (Microbial infection) Susceptibility host factor required for viral infection (e.g. potato virus Y (PVY) and pepper mottle virus (PepMoV)) by recruiting viral RNAs to the host ribosomal complex via an interaction with viral genome-linked protein (VPg). The sequence is that of Eukaryotic translation initiation factor isoform 4E from Nicotiana tabacum (Common tobacco).